Reading from the N-terminus, the 295-residue chain is MAITAQMVKELREKTGAGMMDCKKALTEMNGDMEKAIDFLREKGIAKAAKKADRIAAEGLTYIETKGNEALILELNSETDFVAKNEGFQALTKELAAHLLANKPATVEEALAQSYENGKTVEEHINEAIAKIGEKITLRRFEIVSKTDADAFGAYLHMGGRIGVVTVLEGTTDEEAAKDVAMHVAAVNPKYIDRDAVTAEEVEHERQVLTQQALNEGKPEKIVAKMVEGRLGKFFEEICLLDQAFVKNPDMKVRQFVESKGGTVKGFVRYAVGEGIEKREDNFAEEVMNQVKGNN.

Residues 79-82 (TDFV) are involved in Mg(2+) ion dislocation from EF-Tu.

The protein belongs to the EF-Ts family.

It localises to the cytoplasm. Its function is as follows. Associates with the EF-Tu.GDP complex and induces the exchange of GDP to GTP. It remains bound to the aminoacyl-tRNA.EF-Tu.GTP complex up to the GTP hydrolysis stage on the ribosome. This chain is Elongation factor Ts, found in Bacillus cytotoxicus (strain DSM 22905 / CIP 110041 / 391-98 / NVH 391-98).